The chain runs to 77 residues: UPF0291 protein YnzC (77 aa).

The disordered stretch occupies residues 56 to 77 (DPEGNDVTPEKLKREQRNNKLH). Residues 63–77 (TPEKLKREQRNNKLH) are compositionally biased toward basic and acidic residues.

The protein belongs to the UPF0291 family.

The protein localises to the cytoplasm. This chain is UPF0291 protein YnzC (ynzC), found in Bacillus subtilis (strain 168).